We begin with the raw amino-acid sequence, 460 residues long: Cysteine--tRNA ligase (460 aa).

Residue Cys28 coordinates Zn(2+). Positions 30-40 (MTVYDYCHLGH) match the 'HIGH' region motif. Cys209, His234, and Glu238 together coordinate Zn(2+). Residues 266–270 (KMSKS) carry the 'KMSKS' region motif. Lys269 provides a ligand contact to ATP.

This sequence belongs to the class-I aminoacyl-tRNA synthetase family. As to quaternary structure, monomer. Zn(2+) is required as a cofactor.

It localises to the cytoplasm. It catalyses the reaction tRNA(Cys) + L-cysteine + ATP = L-cysteinyl-tRNA(Cys) + AMP + diphosphate. This chain is Cysteine--tRNA ligase, found in Pseudomonas syringae pv. syringae (strain B728a).